An 814-amino-acid polypeptide reads, in one-letter code: Acyl-coenzyme A dehydrogenase (814 aa).

Glu-497 functions as the Proton acceptor in the catalytic mechanism.

Belongs to the acyl-CoA dehydrogenase family. The cofactor is FAD.

The catalysed reaction is a medium-chain 2,3-saturated fatty acyl-CoA + oxidized [electron-transfer flavoprotein] + H(+) = a medium-chain (2E)-enoyl-CoA + reduced [electron-transfer flavoprotein]. It carries out the reaction a long-chain 2,3-saturated fatty acyl-CoA + oxidized [electron-transfer flavoprotein] + H(+) = a long-chain (2E)-enoyl-CoA + reduced [electron-transfer flavoprotein]. Its pathway is lipid metabolism; fatty acid beta-oxidation. Its function is as follows. Catalyzes the dehydrogenation of acyl-coenzymes A (acyl-CoAs) to 2-enoyl-CoAs, the first step of the beta-oxidation cycle of fatty acid degradation. Is required for E.coli to utilize dodecanoate or oleate as the sole carbon and energy source for growth. The protein is Acyl-coenzyme A dehydrogenase of Escherichia coli (strain K12).